We begin with the raw amino-acid sequence, 693 residues long: Elongation factor G (693 aa).

Residues 8 to 282 (EKTRNIGIMA…AVLDYLPSPL (275 aa)) enclose the tr-type G domain. GTP-binding positions include 17-24 (AHVDAGKT), 81-85 (DTPGH), and 135-138 (NKMD).

It belongs to the TRAFAC class translation factor GTPase superfamily. Classic translation factor GTPase family. EF-G/EF-2 subfamily.

It localises to the cytoplasm. In terms of biological role, catalyzes the GTP-dependent ribosomal translocation step during translation elongation. During this step, the ribosome changes from the pre-translocational (PRE) to the post-translocational (POST) state as the newly formed A-site-bound peptidyl-tRNA and P-site-bound deacylated tRNA move to the P and E sites, respectively. Catalyzes the coordinated movement of the two tRNA molecules, the mRNA and conformational changes in the ribosome. The sequence is that of Elongation factor G from Enterococcus faecalis (strain ATCC 700802 / V583).